Reading from the N-terminus, the 254-residue chain is MARRRQLYEGKAKILFEGPEPGTLVQYFKDDATAFNAQKKGVITGKGVLNNRISEFLMQRLGEIGIPTHFVRRLNMREQLVREVEIIPIEVVIRNVAAGSMSTRLGIPEGTRLPRSIIEYYYKNDALNDPMVSEDHITAFGWASTQDMDDIVHLSLRINDFLTGLFLGVGIVLVDFKIEFGRLWENDDMRIVLADEISPDNCRLWDAKTNEKMDKDRFRRDLGRVEEAYQEVAKRLGILPEAGTRDMKGPETMQ.

Belongs to the SAICAR synthetase family.

The catalysed reaction is 5-amino-1-(5-phospho-D-ribosyl)imidazole-4-carboxylate + L-aspartate + ATP = (2S)-2-[5-amino-1-(5-phospho-beta-D-ribosyl)imidazole-4-carboxamido]succinate + ADP + phosphate + 2 H(+). It functions in the pathway purine metabolism; IMP biosynthesis via de novo pathway; 5-amino-1-(5-phospho-D-ribosyl)imidazole-4-carboxamide from 5-amino-1-(5-phospho-D-ribosyl)imidazole-4-carboxylate: step 1/2. The polypeptide is Phosphoribosylaminoimidazole-succinocarboxamide synthase (Acidiphilium cryptum (strain JF-5)).